Reading from the N-terminus, the 519-residue chain is Maturase K (519 aa).

This sequence belongs to the intron maturase 2 family. MatK subfamily.

Its subcellular location is the plastid. The protein localises to the chloroplast. Usually encoded in the trnK tRNA gene intron. Probably assists in splicing its own and other chloroplast group II introns. In Keteleeria davidiana (David's keteleeria), this protein is Maturase K.